The sequence spans 720 residues: Casein kinase II subunit alpha'-interacting protein (720 aa).

A compositionally biased stretch (polar residues) spans 227–249; sequence LSSPSFTNRLQRNSFPPTSSSLE. Disordered regions lie at residues 227–250, 264–303, 333–366, 602–640, and 678–698; these read LSSP…SLEF, KPLK…SRRL, QNTA…SPKP, TQVQ…VDPT, and LRQS…KCLK. Over residues 608–626 the composition is skewed to low complexity; sequence SSSSSSSCSSVSSSSSASS. The segment covering 630–640 has biased composition (pro residues); the sequence is PSPPTPWVDPT. Over residues 687-698 the composition is skewed to basic residues; sequence KPVRSHNSKCLK.

As to quaternary structure, interacts (via C-terminus) with CSNK2A2. Phosphorylated by CK2 (casein kinase II), specifically by complexes containing catalytic subunit CSNK2A2. Expressed exclusively in testis (at protein level). Within testis, expressed mainly in the intermediate compartment of the seminiferous tubules with weaker expression in the basal and adluminal compartments.

The protein resides in the nucleus. Its function is as follows. May play a role in chromatin regulation of male germ cells. The protein is Casein kinase II subunit alpha'-interacting protein of Mus musculus (Mouse).